We begin with the raw amino-acid sequence, 1483 residues long: MRYLSAEHDDFEKSRIFKSVLTVGAGVAPNTNSCATFKAKSVKNSVERMHTMQRDEIRDEAARHAACPRYTDMNVLNIVRDFDQGAFGGPVDDNLDIFEAEVPEAGRRAAGTAAPRDNTAVPELELMRAMHRASLNDRPPAAGSAQRGSAGSRQPRDNLTPTAADTTGAQASVDLISRPIYQTEQPRPPASNVQQQAAAAALRRQQQPPPGVRRPRSRQARQQQPQQPARPPQTTETQTSNNSNTNNTTATRQVFEQQGPSTIQGRPPTETEILNELFNCHAEIPPLEHVTGHDGYTITTPLFTSVPYQNQTRRSRPQGDNEVPPPTEGDLRPVIPRIPYESETGTETQDDTATGGEITTLVAPSQSDRIQLQIPRSIRNLTRRRAAAAAASQTGSADTPIVTPQPEQTAVPPVLRPPVFRAPSGQSSVSQQQPIQTSNVITTDTTTGTSAPSGDNDSRRAWSPPPWVRRESSSNEPSRQSQSVIEPDEQRYANLPPPPDWLFKRHGVPPRPLRVLTSIDDMSSGCDDTMTQSGTTSSTTRQPPPPNPFAPSRRPQSSGGRCRPPQNGSQGPQHSDDDDSPYPLGSRRQPVPYGTGSVTTTQPSGQLPSDDRGRPAPERRQQPTSRQTVAQTNIIPNTSGGADDDNTPPDRNRLTTFLDEMKRTNWETVEEYLNAIEEDRQRRETEAEHTNLLLPESHTGVTPQRSNNPFMPQVDLDTIPTQDRQETQRQRPSPKPKPKSLREYRRRDPLTGMGRSYTDGSTTSDGDSSDNSWSDESRRPRRRVGSTLVRPPRSHSAEDASGAGGKIKGTARKSPHSSRAPAQQGAGTADLTELAGMASLNLKSPSPRTKLTRSSSLKSPGTTTRDTQQTSHPLTRSASLSSKSSNPFMPRPPDSGGSSDGNTGSSQTSVSTLGINAQQCKFRVPNAHKMFTMVNGKPRLPRMRSAWYSSDDGGESGLECLRTPAPTRKTGGRGGSKITVDVKKIMATAKGSQQAKKCLDKIIKHAGEAERYALQQPSPEPPAGSISARAAPPPKPRTGTRSASQDRSNTRETVPVATDLIDISSAPSSLTQQVSTSASQTTCDGIQLFSVAPPGGSTSQSVQKPSSIPLQPIVTGPSTMTSQSVTDHDGSSVTKKPVISQGTFKHTSQSQPSSEQPAPGEPQPDDQLRDFIAELEGTDVPAPPVPEQPQSTVTNTQTQDVLPSQGSSKTTQQTTSSTQKSSKTGSAPTSGPKSALSKTKSSTSDTASGKSVTRKGSAASSTDPTTKPTRKVSINATEPKKGSKSSTKQSTKTSTQPSDKNNILLNAKVVTIDGDRINIADSNISVFAPTQPTATATQPVTSESTPALPPQLSIPQGQQSVTNIFAPIVPPTNTLSAQATSCTQPLEQRVSLNQPDNPPRRRVVSSFAEQIRNLEVDELKILRQQVRERIANERQQQDSPMDVDRRLALDTLEDMLVSEESAAPTPLPMDTGRFTPKSDVDMS.

8 disordered regions span residues 135–268 (LNDR…GRPP), 306–334 (VPYQ…LRPV), 383–506 (RRRA…FKRH), 518–653 (SIDD…DRNR), 680–911 (RQRR…TSVS), 949–976 (SSDD…RGGS), 1013–1061 (ALQQ…TDLI), and 1089–1299 (FSVA…QPSD). Positions 141 to 153 (AAGSAQRGSAGSR) are enriched in low complexity. Over residues 157-170 (DNLTPTAADTTGAQ) the composition is skewed to polar residues. Low complexity-rich tracts occupy residues 190–206 (ASNV…RRQQ) and 220–251 (ARQQ…TTAT). Residues 252-264 (RQVFEQQGPSTIQ) show a composition bias toward polar residues. 3 stretches are compositionally biased toward low complexity: residues 424–449 (SGQS…TTGT), 474–483 (SNEPSRQSQS), and 529–541 (TMTQ…STTR). Polar residues predominate over residues 596–607 (GSVTTTQPSGQL). A compositionally biased stretch (basic and acidic residues) spans 609–621 (SDDRGRPAPERRQ). Polar residues predominate over residues 622 to 640 (QPTSRQTVAQTNIIPNTSG). Residues 680 to 689 (RQRRETEAEH) show a composition bias toward basic and acidic residues. Over residues 699–710 (TGVTPQRSNNPF) the composition is skewed to polar residues. Residues 740-749 (SLREYRRRDP) show a composition bias toward basic and acidic residues. The span at 754–774 (GRSYTDGSTTSDGDSSDNSWS) shows a compositional bias: low complexity. The span at 841–876 (NLKSPSPRTKLTRSSSLKSPGTTTRDTQQTSHPLTR) shows a compositional bias: polar residues. Over residues 894–909 (DSGGSSDGNTGSSQTS) the composition is skewed to low complexity. Composition is skewed to polar residues over residues 1096–1109 (GSTS…SSIP) and 1116–1125 (GPSTMTSQSV). Over residues 1148 to 1158 (SQSQPSSEQPA) the composition is skewed to low complexity. Positions 1188–1202 (QPQSTVTNTQTQDVL) are enriched in polar residues. 2 stretches are compositionally biased toward low complexity: residues 1204 to 1226 (SQGS…KTGS) and 1233 to 1251 (KSAL…SGKS). Residues 1258–1276 (AASSTDPTTKPTRKVSINA) are compositionally biased toward polar residues. Low complexity predominate over residues 1284–1299 (KSSTKQSTKTSTQPSD). Residues 1408–1438 (AEQIRNLEVDELKILRQQVRERIANERQQQD) are a coiled coil. The disordered stretch occupies residues 1454-1483 (DMLVSEESAAPTPLPMDTGRFTPKSDVDMS).

The protein is Protein ORF C of Elephantid herpesvirus 1 (isolate Asian elephant/Berlin/Kiba/1998) (EIHV-1).